We begin with the raw amino-acid sequence, 81 residues long: MVKIRLKRLGTKKRPYYRIVVQDVREPRNGKTIDEVGIYHPIETAEKQISFDADKVRNWLGKGAQPTDTVRRLLNKKEFTL.

Belongs to the bacterial ribosomal protein bS16 family.

The chain is Small ribosomal subunit protein bS16 from Treponema denticola (strain ATCC 35405 / DSM 14222 / CIP 103919 / JCM 8153 / KCTC 15104).